Reading from the N-terminus, the 273-residue chain is Oxidized low-density lipoprotein receptor 1 (273 aa).

The segment at 1–22 (MTFDDLKIQTVKDQPDEKSNGK) is disordered. Topologically, residues 1–36 (MTFDDLKIQTVKDQPDEKSNGKKAKGLQFLYSPWWC) are cytoplasmic. 2 S-palmitoyl cysteine lipidation sites follow: cysteine 36 and cysteine 46. Residues 37–57 (LAAATLGVLCLGLVVTIMVLG) form a helical; Signal-anchor for type II membrane protein membrane-spanning segment. Positions 58–150 (MQLSQVSDLL…SAPCPQDWIW (93 aa)) are neck. Residues 58–273 (MQLSQVSDLL…CQKKANLRAQ (216 aa)) are Extracellular-facing. The stretch at 64–123 (SDLLTQEQANLTHQKKKLEGQISARQQAEEASQESENELKEMIETLARKLNEKSKEQMEL) forms a coiled coil. N-linked (GlcNAc...) asparagine glycosylation is present at asparagine 73. Residue asparagine 139 is glycosylated (N-linked (GlcNAc...) (complex) asparagine). 3 disulfides stabilise this stretch: cysteine 144-cysteine 155, cysteine 172-cysteine 264, and cysteine 243-cysteine 256. In terms of domain architecture, C-type lectin spans 151–265 (HGENCYLFSS…CILAAFSICQ (115 aa)).

As to quaternary structure, homodimer; disulfide-linked. May form a hexamer composed of 3 homodimers. Interacts with HSP70. In terms of assembly, (Microbial infection) Binds to the head and beginning of the coiled stalk of N.meningitidis adhesin A (nadA) variant 3; binding can be abrogated by monoclonal antibodies against the specific regions of NadA. Binding occurs in protein microarrays, in solution and when LOX-1 is expressed on the cell surface. The intrachain disulfide-bonds prevent N-glycosylation at some sites. In terms of processing, N-glycosylated. In terms of tissue distribution, expressed at high level in endothelial cells and vascular-rich organs such as placenta, lung, liver and brain, aortic intima, bone marrow, spinal cord and substantia nigra. Also expressed at the surface of dendritic cells. Widely expressed at intermediate and low level.

The protein resides in the cell membrane. Its subcellular location is the membrane raft. It is found in the secreted. In terms of biological role, receptor that mediates the recognition, internalization and degradation of oxidatively modified low density lipoprotein (oxLDL) by vascular endothelial cells. OxLDL is a marker of atherosclerosis that induces vascular endothelial cell activation and dysfunction, resulting in pro-inflammatory responses, pro-oxidative conditions and apoptosis. Its association with oxLDL induces the activation of NF-kappa-B through an increased production of intracellular reactive oxygen and a variety of pro-atherogenic cellular responses including a reduction of nitric oxide (NO) release, monocyte adhesion and apoptosis. In addition to binding oxLDL, it acts as a receptor for the HSP70 protein involved in antigen cross-presentation to naive T-cells in dendritic cells, thereby participating in cell-mediated antigen cross-presentation. Also involved in inflammatory process, by acting as a leukocyte-adhesion molecule at the vascular interface in endotoxin-induced inflammation. Also acts as a receptor for advanced glycation end (AGE) products, activated platelets, monocytes, apoptotic cells and both Gram-negative and Gram-positive bacteria. Functionally, (Microbial infection) May serve as a receptor for adhesin A variant 3 (nadA) of N.meningitidis. The sequence is that of Oxidized low-density lipoprotein receptor 1 (OLR1) from Homo sapiens (Human).